We begin with the raw amino-acid sequence, 297 residues long: MNKILNFKKKLQNNNNNTNNNNNNNNPKASILKNNNNDNTNDNLKSKIVVKSTPVIQKSSSFANVPNSINVNTSSSGNKNGDKPILLQSMFNKGKRSNEITNRKIPPPFSEDSFYKSGVTSKVSTTTTTTSSTSKPILPQTITKPNKTNETIVPIPPIKKPISNNNINYNNINIQQSSSTCTISNRVRDNLFLLKEESKSEYNIRVNEIEKKVISNNNIDYNDPYTQTIQKIIMVEKEMIDTFSAMIEFQPLQNLAQTQILKSSSRLSSNNNNNNNNNNNNNNNNSNLLFFFDDQNN.

Disordered regions lie at residues 12–43, 65–85, 122–151, and 265–297; these read QNNN…TNDN, VPNS…DKPI, KVST…TNET, and SRLS…DQNN. Polar residues predominate over residues 65 to 79; it reads VPNSINVNTSSSGNK. The segment covering 122–135 has biased composition (low complexity); it reads KVSTTTTTTSSTSK. Residues 140-151 are compositionally biased toward polar residues; that stretch reads QTITKPNKTNET. A compositionally biased stretch (low complexity) spans 268 to 287; that stretch reads SSNNNNNNNNNNNNNNNNSN.

This is an uncharacterized protein from Dictyostelium discoideum (Social amoeba).